The sequence spans 445 residues: Bifunctional protein GlmU (445 aa).

A pyrophosphorylase region spans residues 1 to 218 (MRALVLAAGK…LLEITGVNTR (218 aa)). UDP-N-acetyl-alpha-D-glucosamine is bound by residues 6–9 (LAAG), Lys20, Gln69, 74–75 (GT), 96–98 (YGD), Gly134, Glu147, Asn162, and Asn216. Mg(2+) is bound at residue Asp98. Residue Asn216 coordinates Mg(2+). Residues 219–239 (KTLVWLEEQLRMRKIEELLEN) form a linker region. An N-acetyltransferase region spans residues 240–445 (GVTILDPATT…GWVLKKRKEE (206 aa)). Residues Arg321 and Lys339 each contribute to the UDP-N-acetyl-alpha-D-glucosamine site. His351 serves as the catalytic Proton acceptor. UDP-N-acetyl-alpha-D-glucosamine-binding residues include Tyr354 and Asn365. Acetyl-CoA contacts are provided by residues Ala368, 374–375 (NY), Ser393, Ala411, and Arg428.

It in the N-terminal section; belongs to the N-acetylglucosamine-1-phosphate uridyltransferase family. The protein in the C-terminal section; belongs to the transferase hexapeptide repeat family. Homotrimer. The cofactor is Mg(2+).

Its subcellular location is the cytoplasm. It carries out the reaction alpha-D-glucosamine 1-phosphate + acetyl-CoA = N-acetyl-alpha-D-glucosamine 1-phosphate + CoA + H(+). The enzyme catalyses N-acetyl-alpha-D-glucosamine 1-phosphate + UTP + H(+) = UDP-N-acetyl-alpha-D-glucosamine + diphosphate. The protein operates within nucleotide-sugar biosynthesis; UDP-N-acetyl-alpha-D-glucosamine biosynthesis; N-acetyl-alpha-D-glucosamine 1-phosphate from alpha-D-glucosamine 6-phosphate (route II): step 2/2. Its pathway is nucleotide-sugar biosynthesis; UDP-N-acetyl-alpha-D-glucosamine biosynthesis; UDP-N-acetyl-alpha-D-glucosamine from N-acetyl-alpha-D-glucosamine 1-phosphate: step 1/1. It participates in bacterial outer membrane biogenesis; LPS lipid A biosynthesis. In terms of biological role, catalyzes the last two sequential reactions in the de novo biosynthetic pathway for UDP-N-acetylglucosamine (UDP-GlcNAc). The C-terminal domain catalyzes the transfer of acetyl group from acetyl coenzyme A to glucosamine-1-phosphate (GlcN-1-P) to produce N-acetylglucosamine-1-phosphate (GlcNAc-1-P), which is converted into UDP-GlcNAc by the transfer of uridine 5-monophosphate (from uridine 5-triphosphate), a reaction catalyzed by the N-terminal domain. This is Bifunctional protein GlmU from Thermotoga petrophila (strain ATCC BAA-488 / DSM 13995 / JCM 10881 / RKU-1).